The sequence spans 217 residues: Small ribosomal subunit protein uS3 (217 aa).

The region spanning 24–93 (IKEFLEYKLS…NPQIDVIDVS (70 aa)) is the KH type-2 domain.

The protein belongs to the universal ribosomal protein uS3 family. In terms of assembly, part of the 30S ribosomal subunit.

In terms of biological role, binds the lower part of the 30S subunit head. The protein is Small ribosomal subunit protein uS3 of Pyrobaculum islandicum (strain DSM 4184 / JCM 9189 / GEO3).